Reading from the N-terminus, the 423-residue chain is Histidine--tRNA ligase (423 aa).

The protein belongs to the class-II aminoacyl-tRNA synthetase family. Homodimer.

The protein resides in the cytoplasm. The catalysed reaction is tRNA(His) + L-histidine + ATP = L-histidyl-tRNA(His) + AMP + diphosphate + H(+). The chain is Histidine--tRNA ligase from Staphylococcus haemolyticus (strain JCSC1435).